The chain runs to 521 residues: Protein nucleotidyltransferase YdiU (521 aa).

8 residues coordinate ATP: Gly109, Gly111, Arg112, Lys131, Asp143, Gly144, Arg194, and Arg201. Asp270 functions as the Proton acceptor in the catalytic mechanism. The Mg(2+) site is built by Asn271 and Asp280. Position 280 (Asp280) interacts with ATP.

This sequence belongs to the SELO family. The cofactor is Mg(2+). Mn(2+) serves as cofactor.

It carries out the reaction L-seryl-[protein] + ATP = 3-O-(5'-adenylyl)-L-seryl-[protein] + diphosphate. The enzyme catalyses L-threonyl-[protein] + ATP = 3-O-(5'-adenylyl)-L-threonyl-[protein] + diphosphate. It catalyses the reaction L-tyrosyl-[protein] + ATP = O-(5'-adenylyl)-L-tyrosyl-[protein] + diphosphate. The catalysed reaction is L-histidyl-[protein] + UTP = N(tele)-(5'-uridylyl)-L-histidyl-[protein] + diphosphate. It carries out the reaction L-seryl-[protein] + UTP = O-(5'-uridylyl)-L-seryl-[protein] + diphosphate. The enzyme catalyses L-tyrosyl-[protein] + UTP = O-(5'-uridylyl)-L-tyrosyl-[protein] + diphosphate. Functionally, nucleotidyltransferase involved in the post-translational modification of proteins. It can catalyze the addition of adenosine monophosphate (AMP) or uridine monophosphate (UMP) to a protein, resulting in modifications known as AMPylation and UMPylation. This Burkholderia mallei (strain ATCC 23344) protein is Protein nucleotidyltransferase YdiU.